Here is a 99-residue protein sequence, read N- to C-terminus: Class II hydrophobin 3 (99 aa).

A signal peptide spans 1–18 (MRIDILATAALLAQLASA). Cystine bridges form between C31-C79, C40-C70, and C41-C53.

This sequence belongs to the cerato-ulmin hydrophobin family. As to quaternary structure, homodimer. Homodimers further self-assemble to form highly ordered films at water-air interfaces through intermolecular interactions.

Its subcellular location is the secreted. It localises to the cell wall. Its function is as follows. Aerial growth, conidiation, and dispersal of filamentous fungi in the environment rely upon a capability of their secreting small amphipathic proteins called hydrophobins (HPBs) with low sequence identity. Class I can self-assemble into an outermost layer of rodlet bundles on aerial cell surfaces, conferring cellular hydrophobicity that supports fungal growth, development and dispersal; whereas Class II form highly ordered films at water-air interfaces through intermolecular interactions but contribute nothing to the rodlet structure. Hyd3 is a class II hydrophobin required for barley root colonization. Hyd1 and Hyd3 are jointly required for conidial hydrophobicity and dispersal, but seem not to be involved in mycelia hydrophobicity. Inhibits conidial germination in environments not suitable for mycelial growth. Plays probably a role in intraspecific signaling or hyphal fusion. This is Class II hydrophobin 3 from Bionectria ochroleuca (Gliocladium roseum).